Reading from the N-terminus, the 445-residue chain is Guanosine nucleotide diphosphate dissociation inhibitor At5g09550 (445 aa).

It belongs to the Rab GDI family.

Functionally, regulates the GDP/GTP exchange reaction of most RAB proteins by inhibiting the dissociation of GDP from them, and the subsequent binding of GTP. The chain is Guanosine nucleotide diphosphate dissociation inhibitor At5g09550 from Arabidopsis thaliana (Mouse-ear cress).